The primary structure comprises 940 residues: Chromatin assembly factor 1 subunit FSM (940 aa).

3 disordered regions span residues 317 to 473 (NVDD…DPCT), 638 to 682 (VDSD…FFVP), and 919 to 940 (KTTQNVNGDTDIPRINLLPSSQ). Residues 320-329 (DSQLQKNTST) are compositionally biased toward polar residues. The stretch at 329-439 (TNEKDTQKAQ…LKKQLAIQKQ (111 aa)) forms a coiled coil. The segment covering 330–429 (NEKDTQKAQK…QKRREKEAVQ (100 aa)) has biased composition (basic and acidic residues). Residues 430 to 440 (LKKQLAIQKQA) show a composition bias toward low complexity. Over residues 445-461 (RFFKNKKDSEKLEKPGG) the composition is skewed to basic and acidic residues. The segment covering 638–650 (VDSDDEWEEEDPG) has biased composition (acidic residues).

The protein belongs to the CHAF1A family. As to quaternary structure, component of the chromatin assembly factor 1 (CAF-1) complex, composed of FSM (FAS1), FAS2 and MSI1. In embryo, expressed in leaf primordia, coleoptile and radicle. In seedlings, expressed in cell division zone of roots, SAM and leaf primordia. Expressed in floral organ primordia.

It is found in the nucleus. Functionally, component of the chromatin assembly factor complex (CAF-1) involved in chromatin assembly following DNA replication and DNA repair. Required for several aspects of development, including apical meristem maintenance by regulating the durations of the S- and G2-phases of the cell cycle through its chromatin assembly activity. The sequence is that of Chromatin assembly factor 1 subunit FSM (FSM) from Oryza sativa subsp. japonica (Rice).